Consider the following 262-residue polypeptide: Acyl-[acyl-carrier-protein]--UDP-N-acetylglucosamine O-acyltransferase (262 aa).

The protein belongs to the transferase hexapeptide repeat family. LpxA subfamily. As to quaternary structure, homotrimer.

The protein resides in the cytoplasm. The catalysed reaction is a (3R)-hydroxyacyl-[ACP] + UDP-N-acetyl-alpha-D-glucosamine = a UDP-3-O-[(3R)-3-hydroxyacyl]-N-acetyl-alpha-D-glucosamine + holo-[ACP]. Its pathway is glycolipid biosynthesis; lipid IV(A) biosynthesis; lipid IV(A) from (3R)-3-hydroxytetradecanoyl-[acyl-carrier-protein] and UDP-N-acetyl-alpha-D-glucosamine: step 1/6. In terms of biological role, involved in the biosynthesis of lipid A, a phosphorylated glycolipid that anchors the lipopolysaccharide to the outer membrane of the cell. This is Acyl-[acyl-carrier-protein]--UDP-N-acetylglucosamine O-acyltransferase from Pectobacterium atrosepticum (strain SCRI 1043 / ATCC BAA-672) (Erwinia carotovora subsp. atroseptica).